Reading from the N-terminus, the 312-residue chain is Malate dehydrogenase (312 aa).

Residues 12 to 17 and Asp-36 contribute to the NAD(+) site; that span reads GAGFTG. Substrate contacts are provided by Arg-87 and Arg-93. Residues Asn-100 and 123–125 contribute to the NAD(+) site; that span reads LTN. Asn-125 provides a ligand contact to substrate. Ser-149 bears the Phosphoserine mark. Arg-156 lines the substrate pocket. The Proton acceptor role is filled by His-180.

This sequence belongs to the LDH/MDH superfamily. MDH type 3 family.

The catalysed reaction is (S)-malate + NAD(+) = oxaloacetate + NADH + H(+). Catalyzes the reversible oxidation of malate to oxaloacetate. The chain is Malate dehydrogenase from Geobacillus sp. (strain WCH70).